The sequence spans 406 residues: MIQNSDSATATLLPRKKERASGPVSVLAIGSANPPNVFHQSLFPDFYFNITQSNHMAEVKAKFTRMCAKSGIKKRRMHINEDILEAHPSIRSYHDNSLDVRQDMLVEEVPKLGKVAADNAIAEWGQPKSNITHLIFCTSSGIDMPGADWALMKLLGLRPTVNRVMVYQQGCFAGCTVLRIAKDLAENNKGSRILVVCSELTLISFRGPTEDHPENLVGQALFGDGAAALIVGADPIPHAENASFEIHWARSSVVPDSDDAVTGNIKENGLVLHLSKTIPDLIGQNIHTLLKDALEEMFDACNPSSFNDLFWVIHPGGPAILDAVEEELNLKSERTHASREILSQYGNMVSPGVLFVLDYMRKRSVDERLSTTGEGLEWGVMLGFGPGLTVETLILKSVPTQAFKYF.

The active site involves C171.

It belongs to the thiolase-like superfamily. Chalcone/stilbene synthases family.

The enzyme catalyses 3-methylbutanoyl-CoA + 3 malonyl-CoA + 3 H(+) = phlorisovalerophenone + 3 CO2 + 4 CoA. Produces 3-methyl-1-(2,4,6-trihydroxyphenyl)butan-1-one (phloroisovalerophenone). This chain is Phloroisovalerophenone synthase (VPS), found in Psilotum nudum (Whisk fern).